Here is a 28-residue protein sequence, read N- to C-terminus: Gamma-conotoxin-like de7a (28 aa).

Disulfide bonds link Cys-2–Cys-18, Cys-9–Cys-22, and Cys-17–Cys-27. Pro-4 is subject to 4-hydroxyproline. Residues Glu-13 and Glu-16 each carry the 4-carboxyglutamate modification. The residue at position 28 (Ser-28) is a Serine amide.

This sequence belongs to the conotoxin O1 superfamily. In terms of tissue distribution, expressed by the venom duct.

The protein localises to the secreted. In terms of biological role, gamma-conotoxins may act on voltage-gated non-specific cation pacemaker channels (HCN). The chain is Gamma-conotoxin-like de7a from Conasprella delessertii (Sozon's cone).